The chain runs to 376 residues: Lipoyl synthase 2, mitochondrial (376 aa).

Positions 109, 114, 120, 140, 144, 147, and 356 each coordinate [4Fe-4S] cluster. Positions 125–345 constitute a Radical SAM core domain; the sequence is ETGTATATIM…QTLGMEMGFR (221 aa).

Belongs to the radical SAM superfamily. Lipoyl synthase family. [4Fe-4S] cluster is required as a cofactor.

It is found in the mitochondrion. It carries out the reaction [[Fe-S] cluster scaffold protein carrying a second [4Fe-4S](2+) cluster] + N(6)-octanoyl-L-lysyl-[protein] + 2 oxidized [2Fe-2S]-[ferredoxin] + 2 S-adenosyl-L-methionine + 4 H(+) = [[Fe-S] cluster scaffold protein] + N(6)-[(R)-dihydrolipoyl]-L-lysyl-[protein] + 4 Fe(3+) + 2 hydrogen sulfide + 2 5'-deoxyadenosine + 2 L-methionine + 2 reduced [2Fe-2S]-[ferredoxin]. Its pathway is protein modification; protein lipoylation via endogenous pathway; protein N(6)-(lipoyl)lysine from octanoyl-[acyl-carrier-protein]: step 2/2. Catalyzes the radical-mediated insertion of two sulfur atoms into the C-6 and C-8 positions of the octanoyl moiety bound to the lipoyl domains of lipoate-dependent enzymes, thereby converting the octanoylated domains into lipoylated derivatives. The protein is Lipoyl synthase 2, mitochondrial of Pisum sativum (Garden pea).